A 772-amino-acid polypeptide reads, in one-letter code: Acetamidase regulatory protein (772 aa).

Over residues 1 to 16 (MSSTAQKNSLSPTGNG) the composition is skewed to polar residues. The tract at residues 1 to 23 (MSSTAQKNSLSPTGNGVTKRKSG) is disordered. Positions 26–59 (ACVHCHRRKVRCDARIVGLPCSNCRSSGKTDCRI) form a DNA-binding region, zn(2)-C6 fungal-type. Disordered regions lie at residues 78-99 (RCRP…TISE), 114-148 (AAAP…QECH), and 627-690 (ATSE…QTAV). The segment covering 114 to 123 (AAAPPASVAP) has biased composition (low complexity). Polar residues-rich tracts occupy residues 124–144 (NVQS…SPQA) and 634–658 (PFSS…QHSS). Over residues 671 to 686 (LLPSYDSPTPDSTSLP) the composition is skewed to low complexity.

The protein resides in the nucleus. Positively regulates the expression of genes involved in the catabolism of certain amides, omega amino acids, and lactams. The polypeptide is Acetamidase regulatory protein (amdR) (Aspergillus fumigatus (strain ATCC MYA-4609 / CBS 101355 / FGSC A1100 / Af293) (Neosartorya fumigata)).